Here is a 158-residue protein sequence, read N- to C-terminus: Transcriptional repressor NrdR (158 aa).

Residues 3–34 (CPSCQNTDSRVLESRAAEGGRSVRRRRECLNC) fold into a zinc finger. Residues 49 to 139 (ITVIKRNGHR…VYRHFRSVSD (91 aa)) form the ATP-cone domain.

This sequence belongs to the NrdR family. Requires Zn(2+) as cofactor.

Functionally, negatively regulates transcription of bacterial ribonucleotide reductase nrd genes and operons by binding to NrdR-boxes. This chain is Transcriptional repressor NrdR, found in Synechococcus sp. (strain CC9311).